The chain runs to 134 residues: Holo-[acyl-carrier-protein] synthase (134 aa).

Asp-8 and Glu-57 together coordinate Mg(2+).

The protein belongs to the P-Pant transferase superfamily. AcpS family. It depends on Mg(2+) as a cofactor.

Its subcellular location is the cytoplasm. The catalysed reaction is apo-[ACP] + CoA = holo-[ACP] + adenosine 3',5'-bisphosphate + H(+). Functionally, transfers the 4'-phosphopantetheine moiety from coenzyme A to a Ser of acyl-carrier-protein. This is Holo-[acyl-carrier-protein] synthase from Brucella abortus (strain S19).